The primary structure comprises 140 residues: Nucleoside diphosphate kinase (140 aa).

The ATP site is built by K11, F59, R87, T93, R104, and N114. Catalysis depends on H117, which acts as the Pros-phosphohistidine intermediate.

The protein belongs to the NDK family. Homotetramer. It depends on Mg(2+) as a cofactor.

The protein resides in the cytoplasm. The enzyme catalyses a 2'-deoxyribonucleoside 5'-diphosphate + ATP = a 2'-deoxyribonucleoside 5'-triphosphate + ADP. The catalysed reaction is a ribonucleoside 5'-diphosphate + ATP = a ribonucleoside 5'-triphosphate + ADP. Its function is as follows. Major role in the synthesis of nucleoside triphosphates other than ATP. The ATP gamma phosphate is transferred to the NDP beta phosphate via a ping-pong mechanism, using a phosphorylated active-site intermediate. The sequence is that of Nucleoside diphosphate kinase from Sphingopyxis alaskensis (strain DSM 13593 / LMG 18877 / RB2256) (Sphingomonas alaskensis).